Consider the following 467-residue polypeptide: AT-rich interactive domain-containing protein cfi-1 (467 aa).

Positions 1–56 (MSVRIDEPQLFVSMSKEPTQETVNVGGHHDDSSSNCDERVDDQTEEQKSPPASPDL) are disordered. Positions 27-48 (GHHDDSSSNCDERVDDQTEEQK) are enriched in basic and acidic residues. Residues 181–273 (DVKRKEWLDD…YLYDYECEKE (93 aa)) enclose the ARID domain. The REKLES domain maps to 356–464 (AILEAHQRNL…GVLFALDETV (109 aa)). Residues 383–441 (LTACSNGNGGNIHNSGRESTSSNDSDIPAKRPKLENDVKTNGASSMRISTKHSDNSKTS) are disordered. Positions 409–420 (IPAKRPKLENDV) are enriched in basic and acidic residues. A compositionally biased stretch (polar residues) spans 421-430 (KTNGASSMRI).

Present in IL2 and URA neurons, and in AVD and PVC interneurons. Present in muscles from head and pharynx (at protein level).

It is found in the nucleus. Functionally, transcription factor. Regulates neuronal subtype identity. Involved in motor neuron fate determination and maintenance, acting as a transcriptional repressor to counteract gene activation by transcription factor unc-3 in a subset of motor neurons. Probably acts by binding to specific promoter elements. Promotes differentiation of URA sensory neurons and prevents them from expressing male-specific CEM neuronal features. Promotes differentiation of AVD and PVC interneurons and their glutamate receptor expression. This is AT-rich interactive domain-containing protein cfi-1 (cfi-1) from Caenorhabditis elegans.